A 144-amino-acid polypeptide reads, in one-letter code: Small ribosomal subunit protein bS16 (144 aa).

The tract at residues 115 to 144 is disordered; that stretch reads NEPVAEAVTPKKKAKKDDAAAESTEAEAAE.

It belongs to the bacterial ribosomal protein bS16 family.

This chain is Small ribosomal subunit protein bS16, found in Nocardia farcinica (strain IFM 10152).